Here is an 843-residue protein sequence, read N- to C-terminus: MSLISAVEDRDIHNIGKTSGGGSRTSSITSSKKSLKHGSKSLRKPKVYQTTGEPLSREALYKAKLKYGVYQSPAQSYSIGVSDAHAASDKAANLAHDNQTTVEAYKRMFIDPNATKAASKMGPKVVRNNSITSATSKTSKESQTKRKSKESPGAAASKAYSMTMETTSLSSQTNSRSYSITSASSVLSGASGSFNSTVNPKPKTLNLEKVLVGAEKKAESRIKERWEPEKTNFQYGVKTDEHGNLNQFSFSNEMMNNIMAKVDAPKAQDLQKVKKVSAEKEAKSMKFALGAANAVKDMHPGEDIDKSIALKAQKRETYLSQLTSQQVLTLARANVDRQLDIIEKSDMHRKLFTNMEYNKAAVAVAQSNHQKKTEFHNKINMGGGLFLSPEDITKIASGLISPVLGEVSERAEAQRAMDEEIAERTEAYNKSSNEWETMERSIISNDAKVLTTTANRHQTEKKTSQEKIKASFDALVARMDTKVAERETLLEDTKSKEIEFKKQMQQELKDEKARLDQDLEEWGKKCEQDITEARKEQEELLKPYHDDLANAEAEHKTLVEERDEINAEISRLQDAIVDHKRKISGYGNDLDAQKNRNIREDDKLLELGQTKESLESHLNDDVIILANKAKEQAELSTKEARLKQLEVDSLINERKSELNATEIELKKEKLNLLEAMKDVASARGDDKIDEEKVKKLIGMTSEEYLTQNKSVEKNVEDLPTQLEKIEEGDELKKEEIVGAETKNSGGDGVPVSTAAKEATETSSAVQTKEPEEKISIGNKSSGKEDANDCKSAEHSKEISVSQKAGNNKSLGVSPDSLEHTFSGFSQGSSIEDDQDAISNQEKK.

A disordered region spans residues 1-53 (MSLISAVEDRDIHNIGKTSGGGSRTSSITSSKKSLKHGSKSLRKPKVYQTTGE). S2 carries the post-translational modification N-acetylserine. S2 is modified (phosphoserine). Residues 33–46 (KSLKHGSKSLRKPK) show a composition bias toward basic residues. 2 positions are modified to phosphoserine: S88 and S130. Residues 120–174 (KMGPKVVRNNSITSATSKTSKESQTKRKSKESPGAAASKAYSMTMETTSLSSQTN) form a disordered region. Polar residues-rich tracts occupy residues 127–137 (RNNSITSATSK) and 163–174 (TMETTSLSSQTN). Phosphoserine is present on residues S182, S401, S584, and S710. Positions 717–843 (DLPTQLEKIE…QDAISNQEKK (127 aa)) are disordered. T720 is modified (phosphothreonine). The span at 752–764 (STAAKEATETSSA) shows a compositional bias: low complexity. A phosphoserine mark is found at S763 and S775. Residues 781–797 (SGKEDANDCKSAEHSKE) show a composition bias toward basic and acidic residues. Residues 798 to 810 (ISVSQKAGNNKSL) show a composition bias toward polar residues. Phosphoserine is present on residues S816, S828, S829, and S838.

Belongs to the EIS1 family.

The protein localises to the cytoplasmic granule. It is found in the cell membrane. Required for normal formation of eisosomes, large cytoplasmic protein assemblies that localize to specialized domains on plasma membrane and mark the site of endocytosis. In Saccharomyces cerevisiae (strain ATCC 204508 / S288c) (Baker's yeast), this protein is Eisosome protein 1 (EIS1).